Here is a 122-residue protein sequence, read N- to C-terminus: Small ribosomal subunit protein uS12 (122 aa).

Residues 1–24 (MPTINQLIRKKRKSTGKKRTAPAL) are disordered. Basic residues predominate over residues 8–20 (IRKKRKSTGKKRT). Aspartate 89 bears the 3-methylthioaspartic acid mark.

This sequence belongs to the universal ribosomal protein uS12 family. As to quaternary structure, part of the 30S ribosomal subunit. Contacts proteins S8 and S17. May interact with IF1 in the 30S initiation complex.

In terms of biological role, with S4 and S5 plays an important role in translational accuracy. Functionally, interacts with and stabilizes bases of the 16S rRNA that are involved in tRNA selection in the A site and with the mRNA backbone. Located at the interface of the 30S and 50S subunits, it traverses the body of the 30S subunit contacting proteins on the other side and probably holding the rRNA structure together. The combined cluster of proteins S8, S12 and S17 appears to hold together the shoulder and platform of the 30S subunit. This is Small ribosomal subunit protein uS12 from Natranaerobius thermophilus (strain ATCC BAA-1301 / DSM 18059 / JW/NM-WN-LF).